We begin with the raw amino-acid sequence, 314 residues long: DNA-directed RNA polymerase subunit alpha (314 aa).

Positions methionine 1–threonine 228 are alpha N-terminal domain (alpha-NTD). Residues lysine 245–aspartate 314 form an alpha C-terminal domain (alpha-CTD) region.

It belongs to the RNA polymerase alpha chain family. Homodimer. The RNAP catalytic core consists of 2 alpha, 1 beta, 1 beta' and 1 omega subunit. When a sigma factor is associated with the core the holoenzyme is formed, which can initiate transcription.

It catalyses the reaction RNA(n) + a ribonucleoside 5'-triphosphate = RNA(n+1) + diphosphate. Functionally, DNA-dependent RNA polymerase catalyzes the transcription of DNA into RNA using the four ribonucleoside triphosphates as substrates. The chain is DNA-directed RNA polymerase subunit alpha from Limosilactobacillus reuteri (strain DSM 20016) (Lactobacillus reuteri).